A 169-amino-acid chain; its full sequence is Ribosome maturation factor RimM (169 aa).

The PRC barrel domain maps to 93–167 (PENSFFISDI…KISVILPKGL (75 aa)).

It belongs to the RimM family. Binds ribosomal protein uS19.

The protein localises to the cytoplasm. Functionally, an accessory protein needed during the final step in the assembly of 30S ribosomal subunit, possibly for assembly of the head region. Essential for efficient processing of 16S rRNA. May be needed both before and after RbfA during the maturation of 16S rRNA. It has affinity for free ribosomal 30S subunits but not for 70S ribosomes. This chain is Ribosome maturation factor RimM, found in Ruminiclostridium cellulolyticum (strain ATCC 35319 / DSM 5812 / JCM 6584 / H10) (Clostridium cellulolyticum).